The primary structure comprises 435 residues: Pregnancy-specific beta-1-glycoprotein 6 (435 aa).

An N-terminal signal peptide occupies residues 1-34 (MGPLSAPPCTQHITWKGLLLTASLLNFWNLPTTA). The region spanning 35 to 143 (QVIIEAKPPK…TGYFTVTLYS (109 aa)) is the Ig-like V-type domain. Residues N61, N103, and N110 are each glycosylated (N-linked (GlcNAc...) asparagine). A Cell attachment site motif is present at residues 126 to 128 (RGD). Ig-like C2-type domains follow at residues 148–233 (PSIS…VTLN), 241–326 (PYIT…VTLN), and 334–405 (PRIY…KEIS). 3 disulfide bridges follow: C168–C216, C261–C309, and C353–C393. N198, N267, N302, and N386 each carry an N-linked (GlcNAc...) asparagine glycan.

The protein belongs to the immunoglobulin superfamily. CEA family.

Its subcellular location is the secreted. The sequence is that of Pregnancy-specific beta-1-glycoprotein 6 (PSG6) from Homo sapiens (Human).